The following is a 394-amino-acid chain: Saposin-like protein 11 (394 aa).

Positions 1–18 (MSVFRFLLFLSLLVGSNA) are cleaved as a signal peptide. N-linked (GlcNAc...) asparagine glycans are attached at residues Asn25 and Asn272. The Saposin B-type domain occupies 306–394 (GNMVCDICEK…SFCKHVPFCK (89 aa)). Disulfide bonds link Cys310–Cys393, Cys313–Cys387, and Cys343–Cys359.

This Caenorhabditis elegans protein is Saposin-like protein 11 (spp-11).